A 231-amino-acid chain; its full sequence is Orotidine 5'-phosphate decarboxylase (231 aa).

Residues aspartate 11, lysine 34, 61-70 (DLKLHDIPNT), threonine 117, arginine 179, glutamine 188, glycine 208, and arginine 209 each bind substrate. The active-site Proton donor is the lysine 63.

Belongs to the OMP decarboxylase family. Type 1 subfamily. In terms of assembly, homodimer.

The enzyme catalyses orotidine 5'-phosphate + H(+) = UMP + CO2. Its pathway is pyrimidine metabolism; UMP biosynthesis via de novo pathway; UMP from orotate: step 2/2. Catalyzes the decarboxylation of orotidine 5'-monophosphate (OMP) to uridine 5'-monophosphate (UMP). This is Orotidine 5'-phosphate decarboxylase from Streptococcus suis (strain 98HAH33).